Here is a 379-residue protein sequence, read N- to C-terminus: Cytochrome b (379 aa).

The next 4 membrane-spanning stretches (helical) occupy residues 33–53 (FGSLLGICLILQIITGLFLAM), 77–98 (WMIRYMHANGASMFFICLFIHI), 113–133 (WNIGVILLFTTMATAFMGYVL), and 178–198 (FFAFHFILPFIIMALAAVHLL). Residues histidine 83 and histidine 97 each coordinate heme b. Heme b-binding residues include histidine 182 and histidine 196. Histidine 201 contributes to the a ubiquinone binding site. A run of 4 helical transmembrane segments spans residues 226–246 (MKDIMGFLTMFLALLTLVLFY), 288–308 (LGGVVALMLSILILIFLPMMH), 320–340 (LSQCMFWILVANLLTLTWIGG), and 347–367 (FIMIGQLASLSYFLIILIIMP).

It belongs to the cytochrome b family. The cytochrome bc1 complex contains 11 subunits: 3 respiratory subunits (MT-CYB, CYC1 and UQCRFS1), 2 core proteins (UQCRC1 and UQCRC2) and 6 low-molecular weight proteins (UQCRH/QCR6, UQCRB/QCR7, UQCRQ/QCR8, UQCR10/QCR9, UQCR11/QCR10 and a cleavage product of UQCRFS1). This cytochrome bc1 complex then forms a dimer. It depends on heme b as a cofactor.

It is found in the mitochondrion inner membrane. Functionally, component of the ubiquinol-cytochrome c reductase complex (complex III or cytochrome b-c1 complex) that is part of the mitochondrial respiratory chain. The b-c1 complex mediates electron transfer from ubiquinol to cytochrome c. Contributes to the generation of a proton gradient across the mitochondrial membrane that is then used for ATP synthesis. This Massoutiera mzabi (Mzab gundi) protein is Cytochrome b (MT-CYB).